Here is a 180-residue protein sequence, read N- to C-terminus: ATP synthase subunit delta (180 aa).

The protein belongs to the ATPase delta chain family. F-type ATPases have 2 components, F(1) - the catalytic core - and F(0) - the membrane proton channel. F(1) has five subunits: alpha(3), beta(3), gamma(1), delta(1), epsilon(1). F(0) has three main subunits: a(1), b(2) and c(10-14). The alpha and beta chains form an alternating ring which encloses part of the gamma chain. F(1) is attached to F(0) by a central stalk formed by the gamma and epsilon chains, while a peripheral stalk is formed by the delta and b chains.

Its subcellular location is the cell membrane. Functionally, f(1)F(0) ATP synthase produces ATP from ADP in the presence of a proton or sodium gradient. F-type ATPases consist of two structural domains, F(1) containing the extramembraneous catalytic core and F(0) containing the membrane proton channel, linked together by a central stalk and a peripheral stalk. During catalysis, ATP synthesis in the catalytic domain of F(1) is coupled via a rotary mechanism of the central stalk subunits to proton translocation. This protein is part of the stalk that links CF(0) to CF(1). It either transmits conformational changes from CF(0) to CF(1) or is implicated in proton conduction. This chain is ATP synthase subunit delta, found in Bacillus cereus (strain G9842).